Reading from the N-terminus, the 505-residue chain is MDKENASVEKAPTTPSLAVPAPSQASPQSPQAALSPSNSSIQATFARARKGSHASQMERPNNRDFAIPASPTVGESSIAELVTAPPAVTPSRSRSSSAASNNQAAMSPVFPAYDDSNAKHYRRWEDDRLDLMVQPDKLVFVEGDTPVEKAFDKLVENHFTSLPVRTAPEHKSVSHSFDYADLNAYLLLVMGYVDAADTTPEALENVKKARSGQPVPVNFVAGLGAKDPFICVPRDSTLATAVEILGSGVHRFAVTEGPASDAVIGILSQRRTVRYIWENGRLFKTLEPLFQTPLTDLGLAQPNPNVLTIGGDEYVIAALRKMNAQNVSSLAVVDASNNLLGNISVVDVRLVSKSSQSHLLKATCAHFLSVILNARGLEDGKDSFPVFHVTPQTSYGRTIAKMVATNAHRLWVVQPDVPSPQPSTPSGQPASKTHGPSHHAAHNGKLIGVVSLTDILNVLGRHAGNSDLDPHFARRNRRRSSSSSVRSRSSYEQFRRSISIDRGQR.

2 disordered regions span residues 1 to 70 and 85 to 104; these read MDKE…IPAS and PPAV…NNQA. Low complexity predominate over residues 15 to 40; sequence PSLAVPAPSQASPQSPQAALSPSNSS. 4 CBS domains span residues 132 to 195, 225 to 282, 302 to 360, and 382 to 468; these read MVQP…YVDA, AKDP…NGRL, PNPN…SHLL, and DSFP…NSDL. 2 disordered regions span residues 414–441 and 464–505; these read QPDV…HHAA and GNSD…RGQR. A compositionally biased stretch (low complexity) spans 481-490; that stretch reads SSSSVRSRSS. Residues 493-505 show a composition bias toward basic and acidic residues; the sequence is QFRRSISIDRGQR.

This sequence belongs to the SDS23 family.

The protein resides in the cytoplasm. It is found in the nucleus. In terms of biological role, involved in DNA replication and cell separation. The protein is Protein SDS23 (SDS23) of Yarrowia lipolytica (strain CLIB 122 / E 150) (Yeast).